The following is a 611-amino-acid chain: Sodium-coupled monocarboxylate transporter 1 (611 aa).

Topologically, residues 1-9 (MDASRDIGS) are extracellular. A helical membrane pass occupies residues 10 to 30 (FVVWDYVVFAGMLLISAAIGI). Over 31–51 (YYAFAGGGQQTSKDFLMGGRS) the chain is Cytoplasmic. Residues 52–72 (MSAVPVALSLTASFMSAVTVL) traverse the membrane as a helical segment. Residues 73–86 (GTPAEVYRFGAIFS) lie on the Extracellular side of the membrane. Residues 87-107 (IFVITYFFVVVISAEVFLPVF) form a helical membrane-spanning segment. The Cytoplasmic portion of the chain corresponds to 108–132 (YRLGITSTYEYLELRFNRCIRLCGT). A helical transmembrane segment spans residues 133-153 (ILFIVQTILYTGIVIYAPALA). Residues 154–161 (LNQVTGFD) are Extracellular-facing. A helical transmembrane segment spans residues 162-182 (LWGAVVATGVVCTFYCTLGGL). Over 183–184 (KA) the chain is Cytoplasmic. The chain crosses the membrane as a helical span at residues 185 to 205 (VVWTDVFQVGIMVAGFASVII). The Extracellular segment spans residues 206–239 (QASITQHGINKILSDAFNGGRLNFWNFDPNPLQR). Residues 240–260 (HTFWTIVIGGTFTWTTIYGVN) form a helical membrane-spanning segment. Topologically, residues 261–279 (QSQVQRYISCKSRLHAKLS) are cytoplasmic. A helical membrane pass occupies residues 280–300 (LYVNLVGLWVILTCSIFCGLA). At 301–336 (LYSRYRECDPWTSKKVSAIDQLMPYLVLDILKNYPG) the chain is on the extracellular side. The chain crosses the membrane as a helical span at residues 337–359 (VPGLFVACAYSGTLSTVSSSINA). Over 360–389 (LAAVTVEDLIKPRFKSLSEKSLSWISQGMS) the chain is Cytoplasmic. A helical transmembrane segment spans residues 390–410 (VLYGALCIGMAALASLMGALL). At 411 to 415 (QAALS) the chain is on the extracellular side. The chain crosses the membrane as a helical span at residues 416-436 (IFGMVGGPLLGLFSLGILVPF). Residues 437-439 (ANS) lie on the Cytoplasmic side of the membrane. A helical membrane pass occupies residues 440–460 (IGALTGLLAGFAISLWVGIGA). Residues 461–518 (QLYPPLPERTLPLPLETYGCNITHNGSDWMSTTEMPFSTSAFQIHNAERTPLMDNWYS) are Extracellular-facing. Asn-485 is a glycosylation site (N-linked (GlcNAc...) asparagine). Residues 519–539 (LSYLYFSTIGTLTTLFVGILI) form a helical membrane-spanning segment. Residues 540–611 (SLSTGGRKQN…HSGKINGTRL (72 aa)) are Cytoplasmic-facing. The short motif at 609 to 611 (TRL) is the PDZ-binding element.

It belongs to the sodium:solute symporter (SSF) (TC 2.A.21) family. Interacts (via PDZ-binding motif) with PDZK1 (via PDZ domains 1 and 3); interaction increases nicotinate transport activity of SLC5A8. As to expression, expressed in brain, colon, kidney and in the ileum and jejunum of small intestine. In the kidney, expression occurred in the proximal tubule and the loop of Henle, being restricted to tubular epithelial cells in both the cortex and the medulla. In the colon, predominantly expressed in the distal half of the large bowel and in the most terminal ileum. Localized selectively in the luminal surface of crypts in the large intestine and to the brush border in the middle parts of crypts in the cecum. In the brain, expression was seen throughout, exclusively in neurons, including the cortex, hippocampus, cerebellum and pituitary gland (at protein level). Expression is reduced in oligodendrogliomas.

The protein localises to the apical cell membrane. It carries out the reaction (S)-lactate(out) + 2 Na(+)(out) = (S)-lactate(in) + 2 Na(+)(in). It catalyses the reaction propanoate(out) + 2 Na(+)(out) = propanoate(in) + 2 Na(+)(in). The catalysed reaction is pyruvate(out) + 2 Na(+)(out) = pyruvate(in) + 2 Na(+)(in). The enzyme catalyses acetate(out) + 2 Na(+)(out) = acetate(in) + 2 Na(+)(in). It carries out the reaction butanoate(out) + 2 Na(+)(out) = butanoate(in) + 2 Na(+)(in). It catalyses the reaction nicotinate(out) + 2 Na(+)(out) = nicotinate(in) + 2 Na(+)(in). The catalysed reaction is (R)-3-hydroxybutanoate(out) + 2 Na(+)(out) = (R)-3-hydroxybutanoate(in) + 2 Na(+)(in). The enzyme catalyses acetoacetate(out) + 2 Na(+)(out) = acetoacetate(in) + 2 Na(+)(in). It carries out the reaction 4-methyl-2-oxopentanoate(out) + 2 Na(+)(out) = 4-methyl-2-oxopentanoate(in) + 2 Na(+)(in). It catalyses the reaction 5-oxo-L-proline(out) + 2 Na(+)(out) = 5-oxo-L-proline(in) + 2 Na(+)(in). The catalysed reaction is iodide(out) = iodide(in). The enzyme catalyses chloride(in) = chloride(out). It carries out the reaction nitrate(in) = nitrate(out). It catalyses the reaction bromide(in) = bromide(out). Transport of D-lactate and pyruvate stimulated by alpha-cyano-4-hydroxycinnamic acid, but inhibited by the short-chain fatty acids acetate, propionate and butyrate. Functionally, acts as an electrogenic sodium (Na(+)) and chloride (Cl-)-dependent sodium-coupled solute transporter, including transport of monocarboxylates (short-chain fatty acids including L-lactate, D-lactate, pyruvate, acetate, propionate, valerate and butyrate), mocarboxylate drugs (nicotinate, benzoate, salicylate and 5-aminosalicylate) and ketone bodies (beta-D-hydroxybutyrate, acetoacetate and alpha-ketoisocaproate), with a Na(+):substrate stoichiometry of between 4:1 and 2:1. Catalyzes passive carrier mediated diffusion of iodide. Mediates iodide transport from the thyrocyte into the colloid lumen through the apical membrane. May be responsible for the absorption of D-lactate and monocarboxylate drugs from the intestinal tract. May play a critical role in the entry of L-lactate and ketone bodies into neurons by a process driven by an electrochemical Na(+) gradient and hence contribute to the maintenance of the energy status and function of neurons. Mediates sodium-coupled electrogenic transport of pyroglutamate (5-oxo-L-proline). Can mediate the transport of chloride, bromide, iodide and nitrate ions when external concentration of sodium ions is reduced. This is Sodium-coupled monocarboxylate transporter 1 from Mus musculus (Mouse).